A 206-amino-acid chain; its full sequence is Small ribosomal subunit protein uS3 (206 aa).

A KH type-2 domain is found at 39–107; that stretch reads IRSYINESFK…SVEVNVVGIK (69 aa).

It belongs to the universal ribosomal protein uS3 family. Part of the 30S ribosomal subunit. Forms a tight complex with proteins S10 and S14.

Its function is as follows. Binds the lower part of the 30S subunit head. Binds mRNA in the 70S ribosome, positioning it for translation. In Wolbachia sp. subsp. Brugia malayi (strain TRS), this protein is Small ribosomal subunit protein uS3.